The following is a 209-amino-acid chain: Small ribosomal subunit protein uS4 (209 aa).

The 64-residue stretch at 99 to 162 folds into the S4 RNA-binding domain; the sequence is RRLDNMVYRL…RKNNKIIEAM (64 aa).

It belongs to the universal ribosomal protein uS4 family. Part of the 30S ribosomal subunit. Contacts protein S5. The interaction surface between S4 and S5 is involved in control of translational fidelity.

Its function is as follows. One of the primary rRNA binding proteins, it binds directly to 16S rRNA where it nucleates assembly of the body of the 30S subunit. Functionally, with S5 and S12 plays an important role in translational accuracy. This Syntrophus aciditrophicus (strain SB) protein is Small ribosomal subunit protein uS4.